The sequence spans 504 residues: L-carnitine/gamma-butyrobetaine antiporter (504 aa).

12 consecutive transmembrane segments (helical) span residues 10–30, 51–71, 92–112, 143–163, 195–215, 231–251, 263–283, 316–336, 347–367, 398–418, 446–466, and 475–495; these read IEPK…WLTV, WGWA…WLVF, IFMM…SIEI, GPLP…FFFV, FYLV…TPLV, LDAI…ACGL, SYLS…SFIM, WTVF…IFLA, LCFG…TVLG, WAAL…CFIA, LLVR…LLAL, and AIIA…LSFI.

The protein belongs to the BCCT transporter (TC 2.A.15) family. CaiT subfamily. As to quaternary structure, homotrimer.

Its subcellular location is the cell inner membrane. The enzyme catalyses 4-(trimethylamino)butanoate(in) + (R)-carnitine(out) = 4-(trimethylamino)butanoate(out) + (R)-carnitine(in). It participates in amine and polyamine metabolism; carnitine metabolism. Its function is as follows. Catalyzes the exchange of L-carnitine for gamma-butyrobetaine. This is L-carnitine/gamma-butyrobetaine antiporter from Escherichia coli (strain ATCC 8739 / DSM 1576 / NBRC 3972 / NCIMB 8545 / WDCM 00012 / Crooks).